A 394-amino-acid polypeptide reads, in one-letter code: Elongation factor Tu (394 aa).

A tr-type G domain is found at 10-204 (KPHVNVGTIG…ALDTYIPEPE (195 aa)). Residues 19-26 (GHVDHGKT) form a G1 region. Residue 19-26 (GHVDHGKT) coordinates GTP. Thr26 lines the Mg(2+) pocket. The segment at 60–64 (GITIA) is G2. The G3 stretch occupies residues 81–84 (DCPG). Residues 81–85 (DCPGH) and 136–139 (NKCD) contribute to the GTP site. The interval 136–139 (NKCD) is G4. Residues 174-176 (SAL) are G5.

This sequence belongs to the TRAFAC class translation factor GTPase superfamily. Classic translation factor GTPase family. EF-Tu/EF-1A subfamily. In terms of assembly, monomer.

The protein localises to the cytoplasm. The catalysed reaction is GTP + H2O = GDP + phosphate + H(+). GTP hydrolase that promotes the GTP-dependent binding of aminoacyl-tRNA to the A-site of ribosomes during protein biosynthesis. The sequence is that of Elongation factor Tu from Vibrio parahaemolyticus serotype O3:K6 (strain RIMD 2210633).